The chain runs to 386 residues: GTPase Obg (386 aa).

Residues 4–162 (SNFVDYVKIY…MTVILELKLL (159 aa)) form the Obg domain. Residues 18–45 (KGGRGSTHMRREKYTPNGGPDGGDGGRG) form a disordered region. Over residues 36–45 (GPDGGDGGRG) the composition is skewed to gly residues. One can recognise an OBG-type G domain in the interval 163–329 (ADVGLVGFPN…LKDILWTELN (167 aa)). Residues 169 to 176 (GFPNAGKS), 194 to 198 (FTTLE), 216 to 219 (DIPG), 283 to 286 (TKSD), and 310 to 312 (SSV) contribute to the GTP site. The Mg(2+) site is built by serine 176 and threonine 196. The interval 351-386 (ELKDMGEDEELDYEYEDDGDEDDLDYEYEEEDWEDK) is disordered. The span at 356-386 (GEDEELDYEYEDDGDEDDLDYEYEEEDWEDK) shows a compositional bias: acidic residues.

Belongs to the TRAFAC class OBG-HflX-like GTPase superfamily. OBG GTPase family. In terms of assembly, monomer. Mg(2+) is required as a cofactor.

It localises to the cytoplasm. Functionally, an essential GTPase which binds GTP, GDP and possibly (p)ppGpp with moderate affinity, with high nucleotide exchange rates and a fairly low GTP hydrolysis rate. Plays a role in control of the cell cycle, stress response, ribosome biogenesis and in those bacteria that undergo differentiation, in morphogenesis control. This is GTPase Obg from Bacteroides fragilis (strain YCH46).